The primary structure comprises 263 residues: Ribonuclease HII (263 aa).

Residues 71–262 (QAIAGIDEVG…VKSMCCDSTN (192 aa)) enclose the RNase H type-2 domain. A divalent metal cation contacts are provided by Asp-77, Glu-78, and Asp-172.

It belongs to the RNase HII family. It depends on Mn(2+) as a cofactor. Mg(2+) serves as cofactor.

The protein localises to the cytoplasm. It catalyses the reaction Endonucleolytic cleavage to 5'-phosphomonoester.. Functionally, endonuclease that specifically degrades the RNA of RNA-DNA hybrids. The chain is Ribonuclease HII from Streptococcus pyogenes serotype M12 (strain MGAS2096).